The sequence spans 523 residues: La-related protein 1C (523 aa).

A compositionally biased stretch (low complexity) spans 1–16; the sequence is MASATSNNPASSSMSP. Disordered regions lie at residues 1-52 and 95-313; these read MASA…VRGE and AAGD…VRHP. Alanine 2 is modified (N-acetylalanine). The segment covering 22–31 has biased composition (polar residues); sequence NHGSPTASVA. Low complexity-rich tracts occupy residues 32–44 and 146–169; these read QSPRRPSRQVSSP and SNKSSSDSLKSLGDVPSSSSASSS. At serine 33 the chain carries Phosphoserine. 2 stretches are compositionally biased toward polar residues: residues 206–270 and 282–305; these read QRNG…NGNH and HGNQNWTFQRSFNGREGNAQSQRG. The HTH La-type RNA-binding domain maps to 363 to 452; that stretch reads HYQDPPLHMK…RDNWQNWVLR (90 aa). Residues 474-523 are disordered; that stretch reads GNLSVDQSSADPIGGSSSQLQPTEALSDDQQQSSSTAPVSNHNAPDGANR. Positions 477–516 are enriched in polar residues; it reads SVDQSSADPIGGSSSQLQPTEALSDDQQQSSSTAPVSNHN.

It belongs to the LARP family. In terms of tissue distribution, age-dependent accumulation in rosette leaves.

The protein localises to the cytoplasm. Its function is as follows. Promotes leaf senescence mediated by abscisic acid (ABA), salicylic acid (SA) and jasmonic acid (MeJA), probably though the induction of expression of senescence-associated genes (SAGs) and defense-related genes. The polypeptide is La-related protein 1C (LARP1C) (Arabidopsis thaliana (Mouse-ear cress)).